We begin with the raw amino-acid sequence, 393 residues long: MTDVALPTAAPAAFDLPPDSVGVVAPQRMHFAEPLKLRNGSSIAGYDLMVETYGTLNAARSNAVLVCHALNASHHVAGVYAEDPRDVGWWDNMVGPGKPLDTNRFFVIGVNNLGSCFGSTGPMSLNPATGAPYGAAFPVVTVEDWVNAQALVADAFGITQFAAVMGGSLGGMQAVAWSLLYPERLRHCIVVASTPKLSAQNIAFNEVARSAILSDPDFHGGNYYAHGVKPKRGLRVARMIGHITYLSDEDMAEKFGRELKTDDIRFSFDVEFQVESYLRYQGDKFAEYFDANTYLLITRALDYFDPALAFGGDLTRAMAQTQASFLVASFGTDWRFAPSRSRELVKALLDNKRPVSYAEIDAPHGHDAFLLDDPRYHNLMRAYYDRIAEEIGA.

Residues 62-372 (NAVLVCHALN…PHGHDAFLLD (311 aa)) enclose the AB hydrolase-1 domain. The active-site Nucleophile is the Ser168. Substrate is bound at residue Arg238. Catalysis depends on residues Asp333 and His366. Residue Asp367 coordinates substrate.

Belongs to the AB hydrolase superfamily. MetX family. As to quaternary structure, homodimer.

Its subcellular location is the cytoplasm. It catalyses the reaction L-homoserine + succinyl-CoA = O-succinyl-L-homoserine + CoA. It functions in the pathway amino-acid biosynthesis; L-methionine biosynthesis via de novo pathway; O-succinyl-L-homoserine from L-homoserine: step 1/1. In terms of biological role, transfers a succinyl group from succinyl-CoA to L-homoserine, forming succinyl-L-homoserine. The protein is Homoserine O-succinyltransferase of Cupriavidus necator (strain ATCC 17699 / DSM 428 / KCTC 22496 / NCIMB 10442 / H16 / Stanier 337) (Ralstonia eutropha).